A 533-amino-acid chain; its full sequence is MKREHKLEHEDMSSGSGKSGVCWEDDGGGMDELLAVVGYKVKSSDMAEVAQKLEQLEQAMMGNNFHDHDESTIAQHLSNDTVHYNPSDISNWLQTMLSNFDPQPNNPSVNSDDNDLNAIPGKAIYAADEFTSRKRVKRNESVTVTTESTTTRPIMVVETQEKGIRLVHSLMACAEAVEQNNLKMAEALVKQIGYLAVSQEGAMRKVATYFAEGLARRIYGVFPQHSVSDSLQIHFYETCPNLKFAHFTANQAILEAFQGKSSVHVIDFSINQGMQWPALMQALALRPGGPPAFRLTGIGPPASDNSDHLQQVGWRLAQFAQTIHVQFEYRGFVANSLADLDASMLELRSPETESVAVNSVFELHKLNARPGALEKVFSVIRQIRPEIVTVVEQEANHNGPAFLDRFTESLHYYSTLFDSLEGSSVEPQDKAMSEVYLGKQICNVVACEGTDRVERHETLNQWRNRFNSAGFSPVHLGSNAFKQASMLLALFAGGDGYKVEENDGCLMLGWHTRPLIATSAWKLAAANSVVVSH.

Positions 1 to 12 (MKREHKLEHEDM) are enriched in basic and acidic residues. The disordered stretch occupies residues 1–24 (MKREHKLEHEDMSSGSGKSGVCWE). Positions 31 to 35 (DELLA) match the DELLA motif motif. The region spanning 157-522 (VETQEKGIRL…RPLIATSAWK (366 aa)) is the GRAS domain. The tract at residues 164-218 (IRLVHSLMACAEAVEQNNLKMAEALVKQIGYLAVSQEGAMRKVATYFAEGLARRI) is leucine repeat I (LRI). The tract at residues 166–203 (LVHSLMACAEAVEQNNLKMAEALVKQIGYLAVSQEGAM) is required for possible homodimerization. The short motif at 171–175 (MACAE) is the LxCxE motif; degenerate element. Residues 232 to 297 (QIHFYETCPN…GGPPAFRLTG (66 aa)) are VHIID. The short motif at 263-267 (VHVID) is the VHIID element. A leucine repeat II (LRII) region spans residues 311-343 (QVGWRLAQFAQTIHVQFEYRGFVANSLADLDAS). The PFYRE stretch occupies residues 355-443 (VAVNSVFELH…EVYLGKQICN (89 aa)). Positions 363–367 (LHKLN) match the LXXLL motif; degenerate motif. Positions 446 to 522 (ACEGTDRVER…RPLIATSAWK (77 aa)) are SAW.

It belongs to the GRAS family. DELLA subfamily. As to quaternary structure, may be a homodimer. Post-translationally, ubiquitinated. Upon GA application it is ubiquitinated, leading to its subsequent degradation.

It is found in the nucleus. Functionally, probable transcriptional regulator that acts as a repressor of the gibberellin (GA) signaling pathway. Probably acts by participating in large multiprotein complexes that repress transcription of GA-inducible genes. Upon GA application, it is degraded by the proteasome, allowing the GA signaling pathway. Together with DELLA1, required to enable arbuscule development during arbuscular mycorrhizal (AM) symbiosis with AM fungi (e.g. Glomus versiforme) via the regulation of RAM1 which, in turn, regulates various AM genes (e.g. NSP1, NSP2, PT4, LEC5, RAM2, EXO70I, STR and RAD1). The protein is DELLA protein 2 of Medicago truncatula (Barrel medic).